Here is a 215-residue protein sequence, read N- to C-terminus: Proapoptotic nucleolar protein 1 (215 aa).

A disordered region spans residues 35–215 (RKGTPTARCL…RLPAPRSAST (181 aa)). The segment covering 169-180 (PRPPQHLSPPQP) has biased composition (pro residues). Residues 185–215 (MGAAEGSRRADTHHARRRRRARLPAPRSAST) form a necessary for nucleolar localization region.

Widely expressed.

Its subcellular location is the nucleus. The protein resides in the nucleolus. In terms of biological role, apoptosis-inducing protein that modulates the tumor suppressor function of CDKN2A/p14ARF. Enhances the stability of CDKN2A/p14ARF protein by protecting it from degradation. May act as a tumor suppressor. The chain is Proapoptotic nucleolar protein 1 from Homo sapiens (Human).